The following is a 213-amino-acid chain: Penicillin-binding protein activator LpoB (213 aa).

The first 19 residues, M1–G19, serve as a signal peptide directing secretion. C20 carries the N-palmitoyl cysteine lipid modification. C20 carries S-diacylglycerol cysteine lipidation. The interval P28 to H74 is disordered. Over residues P36–P50 the composition is skewed to pro residues.

The protein belongs to the LpoB family. In terms of assembly, interacts with PBP1b.

It is found in the cell outer membrane. Its function is as follows. Regulator of peptidoglycan synthesis that is essential for the function of penicillin-binding protein 1B (PBP1b). In Escherichia coli O157:H7, this protein is Penicillin-binding protein activator LpoB.